The following is a 363-amino-acid chain: Spindle pole body component SPC42 (363 aa).

Residues 60 to 137 are a coiled coil; that stretch reads EFINKAVQQN…ANSTFKEMRF (78 aa). The interval 160–184 is disordered; that stretch reads PKHRAPDATGNPRTTNKVSNTSDQD. A compositionally biased stretch (polar residues) spans 170-182; it reads NPRTTNKVSNTSD. 4 positions are modified to phosphoserine: Ser-213, Ser-217, Ser-284, and Ser-329. Positions 249–298 form a coiled coil; it reads DIMMYESAELKRVEEEIEELKRKILVRKKHDLRKLSLNNQLQELQSMMDG. The interval 310-363 is disordered; it reads HNHATHRHSSQSSRDYSPSSDACLECSNDLYEKNRVKPENNMSETFATPTPNNR. Low complexity predominate over residues 319 to 329; the sequence is SQSSRDYSPSS. Over residues 349-363 the composition is skewed to polar residues; it reads NNMSETFATPTPNNR.

The protein belongs to the SPC42 family. In terms of assembly, component of the SPC110 complex containing at least CMD1, SPC29, SPC42 and SCP110.

The protein resides in the nucleus. It localises to the cytoplasm. It is found in the cytoskeleton. The protein localises to the microtubule organizing center. Its subcellular location is the spindle pole body. Functionally, forms a polymeric layer at the periphery of the spindle pole body (SPB) central plaque which has an essential function during SPB duplication and may facilitate attachment of the SPB to the nuclear membrane. The polypeptide is Spindle pole body component SPC42 (SPC42) (Saccharomyces cerevisiae (strain ATCC 204508 / S288c) (Baker's yeast)).